The chain runs to 507 residues: Glycosyltransferase family 92 protein C33H5.2 (507 aa).

The helical transmembrane segment at 6 to 26 threads the bilayer; that stretch reads VILVFCASFALFFTFIIFGRY. Residues 155-444 enclose the GT92 domain; it reads RDVVMCIAPL…LKCYNEKFYD (290 aa).

The protein belongs to the glycosyltransferase 92 family.

It localises to the membrane. This is Glycosyltransferase family 92 protein C33H5.2 from Caenorhabditis elegans.